The chain runs to 158 residues: MFRGIYETTIDAKGRTSLPARFRDVLVESFGDERFFVTNSVPVDLGGGVYSSGLLIFPYQEWFIFEESFLNGKGLTSAQRNSIMRTIVAPAVECSADKLGRVLVPPHLRKNAVLEREILFVGAMKKVEIWSQSEWDKVRAHDMKAFPSDSEAVAELGL.

SpoVT-AbrB domains follow at residues 5–50 and 91–134; these read IYET…GGVY and AVEC…SQSE.

The protein belongs to the MraZ family. Forms oligomers.

The protein resides in the cytoplasm. It localises to the nucleoid. This chain is Transcriptional regulator MraZ, found in Geobacter metallireducens (strain ATCC 53774 / DSM 7210 / GS-15).